Here is a 196-residue protein sequence, read N- to C-terminus: Late protein I196L (196 aa).

Repeat copies occupy residues 28-48 and 49-70. Residues 71 to 92 form a 3; approximate repeat; that stretch reads SNYLTSAIPNIISDKEDDTPFS.

Belongs to the asfivirus I196L family.

In African swine fever virus (strain Badajoz 1971 Vero-adapted) (Ba71V), this protein is Late protein I196L.